A 146-amino-acid chain; its full sequence is Hemoglobin subunit beta (146 aa).

The region spanning His-2 to His-146 is the Globin domain. Residues His-63 and His-92 each contribute to the heme b site.

It belongs to the globin family. As to quaternary structure, heterotetramer of two alpha chains and two beta chains. Oxygenation results in dissociation to dimers. As to expression, red blood cells.

Its function is as follows. Involved in oxygen transport from the lung to the various peripheral tissues. The protein is Hemoglobin subunit beta (HBB) of Erythrolamprus miliaris (South American water snake).